A 139-amino-acid polypeptide reads, in one-letter code: Superoxide dismutase [Cu-Zn] (139 aa).

A lipid anchor (S-palmitoyl cysteine) is attached at cysteine 6. Cu cation is bound by residues histidine 47 and histidine 49. Zn(2+)-binding residues include histidine 72, histidine 81, and aspartate 84. Residue histidine 114 coordinates Cu cation. The segment covering aspartate 118–leucine 129 has biased composition (basic and acidic residues). The interval aspartate 118–alanine 139 is disordered.

The protein belongs to the Cu-Zn superoxide dismutase family. In terms of assembly, homodimer. The cofactor is Cu cation. Requires Zn(2+) as cofactor.

The protein resides in the cytoplasm. Its subcellular location is the nucleus. It carries out the reaction 2 superoxide + 2 H(+) = H2O2 + O2. Destroys radicals which are normally produced within the cells and which are toxic to biological systems. This Lampanyctus crocodilus (Jewel lanternfish) protein is Superoxide dismutase [Cu-Zn] (sod1).